A 378-amino-acid chain; its full sequence is Alkaline elastase YaB (378 aa).

An N-terminal signal peptide occupies residues 1-27 (MNKKMGKIVAGTALIISVAFSSSIAQA). A propeptide spanning residues 28 to 110 (AEEAKEKYLI…IEEDAEVTTM (83 aa)) is cleaved from the precursor. Q111 provides a ligand contact to Ca(2+). The 264-residue stretch at 114 to 377 (PWGINRVQAP…SGLVNAEAAT (264 aa)) folds into the Peptidase S8 domain. D141 acts as the Charge relay system in catalysis. D149 serves as a coordination point for Ca(2+). H171 functions as the Charge relay system in the catalytic mechanism. Positions 182, 184, 186, 188, 272, 274, and 277 each coordinate Ca(2+). The active-site Charge relay system is the S324.

It belongs to the peptidase S8 family. The cofactor is Ca(2+).

The protein resides in the secreted. In terms of biological role, digests elastin efficiently, has a substrate preference for Ala in P1 position. The sequence is that of Alkaline elastase YaB (ale) from Bacillus sp. (strain YaB).